Reading from the N-terminus, the 301-residue chain is D-alanine--D-alanine ligase A (301 aa).

The ATP-grasp domain occupies 96 to 290 (KKILRYEGVE…YSKLLDMIIE (195 aa)). 123-178 (LDKLGFPLVVKPNSGGSSVGVKIVYNKNELISMLETVFEWDSEVVIEKYIKGDEIT) contacts ATP. Mg(2+) contacts are provided by D245, E257, and N259.

Belongs to the D-alanine--D-alanine ligase family. Mg(2+) serves as cofactor. It depends on Mn(2+) as a cofactor.

The protein localises to the cytoplasm. It catalyses the reaction 2 D-alanine + ATP = D-alanyl-D-alanine + ADP + phosphate + H(+). The protein operates within cell wall biogenesis; peptidoglycan biosynthesis. Functionally, cell wall formation. In Bacillus cereus (strain ATCC 14579 / DSM 31 / CCUG 7414 / JCM 2152 / NBRC 15305 / NCIMB 9373 / NCTC 2599 / NRRL B-3711), this protein is D-alanine--D-alanine ligase A.